Consider the following 258-residue polypeptide: Sec-independent protein translocase protein TatC (258 aa).

At 2 to 23 the chain is on the cytoplasmic side; that stretch reads SVEDTQPLITHLIELRKRLLNC. Residues 24-44 traverse the membrane as a helical segment; sequence IIAVIVIFLCLVYFANDIYHL. The Periplasmic portion of the chain corresponds to 45 to 75; the sequence is VSAPLIKQLPQGSTMIATDVASPFFTPIKLT. Residues 76 to 96 form a helical membrane-spanning segment; the sequence is FMVSLILSAPVILYQVWAFIA. Topologically, residues 97–115 are cytoplasmic; it reads PALYKHERRLVVPLLVSSS. A helical transmembrane segment spans residues 116–136; it reads LLFYIGMAFAYFVVFPLAFGF. Residues 137–156 lie on the Periplasmic side of the membrane; it reads LANTAPEGVQVSTDIASYLS. Residues 157–177 traverse the membrane as a helical segment; sequence FVMALFMAFGVSFEVPVAIVL. The Cytoplasmic segment spans residues 178–192; the sequence is LCWMGITSPEDLRKK. The helical transmembrane segment at 193–210 threads the bilayer; it reads RPYVLVGAFVVGMLLTPP. Asp-211 is a topological domain (periplasmic). A helical transmembrane segment spans residues 212 to 232; the sequence is VFSQTLLAIPMYCLFEIGVFF. Topologically, residues 233 to 258 are cytoplasmic; the sequence is SRFYVGKGRNREEENDAEAESEKTEE.

Belongs to the TatC family. As to quaternary structure, the Tat system comprises two distinct complexes: a TatABC complex, containing multiple copies of TatA, TatB and TatC subunits, and a separate TatA complex, containing only TatA subunits. Substrates initially bind to the TatABC complex, which probably triggers association of the separate TatA complex to form the active translocon. TatC can form a distinct, stable, multimeric complex independent of TatA and TatB. Each of TatA, TatB and TatC are able to interact in pairs without the third partner. Interacts with the signal sequence of DmsA and DmsD.

The protein resides in the cell inner membrane. In terms of biological role, part of the twin-arginine translocation (Tat) system that transports large folded proteins containing a characteristic twin-arginine motif in their signal peptide across membranes. Together with TatB, TatC is part of a receptor directly interacting with Tat signal peptides. The chain is Sec-independent protein translocase protein TatC from Escherichia coli (strain K12).